A 137-amino-acid polypeptide reads, in one-letter code: Large ribosomal subunit protein uL16 (137 aa).

Basic residues predominate over residues 1–13 (MLQPKRRKYRKEQ). Positions 1–22 (MLQPKRRKYRKEQKGRNTGVAT) are disordered.

The protein belongs to the universal ribosomal protein uL16 family. Part of the 50S ribosomal subunit.

Binds 23S rRNA and is also seen to make contacts with the A and possibly P site tRNAs. The sequence is that of Large ribosomal subunit protein uL16 from Polynucleobacter asymbioticus (strain DSM 18221 / CIP 109841 / QLW-P1DMWA-1) (Polynucleobacter necessarius subsp. asymbioticus).